We begin with the raw amino-acid sequence, 1458 residues long: ABC multidrug transporter B (1458 aa).

5 consecutive transmembrane segments (helical) span residues 30 to 50 (FSLL…VLII), 70 to 90 (LLWA…VLAV), 102 to 122 (ASIA…LLSC), 128 to 148 (STTP…FDIA), and 165 to 185 (IAIL…LEAV). A glycan (N-linked (GlcNAc...) asparagine) is linked at N208. The helical transmembrane segment at 273–295 (WPLLSAVPPRACLAALNFCQPLL) threads the bilayer. The ABC transmembrane type-1 1 domain maps to 283 to 561 (ACLAALNFCQ…LVMALMTFVG (279 aa)). N309 carries N-linked (GlcNAc...) asparagine glycosylation. Helical transmembrane passes span 314–334 (IGYG…VTMG), 387–407 (WQTI…IYLL), 411–431 (LGVA…GCLI), 501–521 (LGWT…YGIM), and 541–561 (LFAL…TFVG). In terms of domain architecture, ABC transporter 1 spans 626–853 (LTVKNATFAW…AGGYVSSFGL (228 aa)). N-linked (GlcNAc...) asparagine glycosylation occurs at N630. 660–667 (GPSGCGKS) is an ATP binding site. 3 N-linked (GlcNAc...) asparagine glycosylation sites follow: N702, N804, and N879. In terms of domain architecture, ABC transmembrane type-1 2 spans 933-1182 (PNGRTGYYLG…LVTFWTNLET (250 aa)). Helical transmembrane passes span 940–960 (YLGI…IGCW), 978–998 (LLAT…SGSI), 1016–1036 (AAIN…LMGI), 1040–1060 (YAAI…KVYL), 1125–1145 (LTLT…VLVV), and 1156–1176 (VGVA…LVTF). The ABC transporter 2 domain maps to 1219 to 1449 (IEFKSVSAEY…EGSYFSRLYA (231 aa)). Residue 1252 to 1259 (GRTGSGKT) coordinates ATP. N1316 carries N-linked (GlcNAc...) asparagine glycosylation.

The protein belongs to the ABC transporter superfamily. ABCC family. Conjugate transporter (TC 3.A.1.208) subfamily.

The protein resides in the cell membrane. In terms of biological role, pleiotropic ABC efflux transporter that may be involved in A.fumigatus adaptation to azoles such as vorizonazole. The chain is ABC multidrug transporter B from Aspergillus fumigatus (strain ATCC MYA-4609 / CBS 101355 / FGSC A1100 / Af293) (Neosartorya fumigata).